The primary structure comprises 414 residues: WW domain-containing oxidoreductase (414 aa).

The interval 1-24 is disordered; sequence MAALRYAGLDDTDSEDELPPGWEE. Phosphothreonine is present on threonine 12. Serine 14 is modified (phosphoserine). One can recognise a WW 1 domain in the interval 16–49; it reads DELPPGWEERTTKDGWVYYANHTEEKTQWEHPKT. Tyrosine 33 carries the post-translational modification Phosphotyrosine. A Nuclear localization signal motif is present at residues 50–55; that stretch reads GKRKRV. A WW 2 domain is found at 57–90; that stretch reads GDLPYGWEQGTDENGQVFFVDHINKRTTYLDPRL. The segment at 125–414 is interaction with MAPT; it reads KVVVVTGANS…IQERLGSQSG (290 aa). 131–137 is an NADP(+) binding site; that stretch reads GANSGIG. Residues 209 to 273 form a mediates targeting to the mitochondria region; the sequence is CNAATFALPW…RFTDINDSLG (65 aa). Serine 260 provides a ligand contact to substrate. Residue tyrosine 287 is modified to Phosphotyrosine; by TNK2. Tyrosine 293 acts as the Proton acceptor in catalysis.

This sequence belongs to the short-chain dehydrogenases/reductases (SDR) family. Interacts with TP53, p73/TP73 and MAPK8. Interacts with MAPT/TAU, RUNX2 and HYAL2. Forms a ternary complex with TP53 and MDM2. Interacts with ERBB4, LITAF and WBP1. Interacts with DVL1, DVL2 and DVL3. May interact with FAM189B and SCOTIN. Interacts with TNK2. Interacts with TMEM207. Interacts (via WW domain) with VOPP1. Post-translationally, phosphorylated upon genotoxic stress. Phosphorylation of Tyr-33 regulates interaction with TP53, TP73 and MAPK8. May also regulate proapoptotic activity. Phosphorylation by TNK2 is associated with polyubiquitination and degradation. In terms of processing, ubiquitinated when phosphorylated by TNK2, leading to its degradation.

It is found in the cytoplasm. The protein resides in the nucleus. Its subcellular location is the mitochondrion. The protein localises to the golgi apparatus. It localises to the lysosome. Functionally, putative oxidoreductase. Acts as a tumor suppressor and plays a role in apoptosis. May function synergistically with p53/TP53 to control genotoxic stress-induced cell death. Plays a role in TGFB1 signaling and TGFB1-mediated cell death. May also play a role in tumor necrosis factor (TNF)-mediated cell death. Required for normal bone development. Inhibits Wnt signaling, probably by sequestering DVL2 in the cytoplasm. This is WW domain-containing oxidoreductase (WWOX) from Pongo abelii (Sumatran orangutan).